A 249-amino-acid chain; its full sequence is Putative adhesin RC1281 (249 aa).

A signal peptide spans 1–22; it reads MKKLLLIAAASTALLTSGLSFA.

Its function is as follows. Adheres to biotinylated epithelial (Vero cell) proteins. This Rickettsia conorii (strain ATCC VR-613 / Malish 7) protein is Putative adhesin RC1281.